The chain runs to 302 residues: N-acetylmuramic acid 6-phosphate etherase (302 aa).

Positions 58-221 constitute an SIS domain; it reads IFERFKKGGR…TTTLMIKLGK (164 aa). E86 functions as the Proton donor in the catalytic mechanism. E117 is an active-site residue.

It belongs to the GCKR-like family. MurNAc-6-P etherase subfamily. Homodimer.

The catalysed reaction is N-acetyl-D-muramate 6-phosphate + H2O = N-acetyl-D-glucosamine 6-phosphate + (R)-lactate. The protein operates within amino-sugar metabolism; N-acetylmuramate degradation. Its function is as follows. Specifically catalyzes the cleavage of the D-lactyl ether substituent of MurNAc 6-phosphate, producing GlcNAc 6-phosphate and D-lactate. The protein is N-acetylmuramic acid 6-phosphate etherase of Mycoplasma mycoides subsp. mycoides SC (strain CCUG 32753 / NCTC 10114 / PG1).